The following is a 329-amino-acid chain: UPF0421 protein SH1063 (329 aa).

Helical transmembrane passes span 25–45, 60–80, 87–107, 108–128, and 131–151; these read LFCL…IVTI, LPAT…FGDP, FSAL…GTTV, AVLT…FNFF, and LLTA…VLPP.

Belongs to the UPF0421 family.

Its subcellular location is the cell membrane. The polypeptide is UPF0421 protein SH1063 (Staphylococcus haemolyticus (strain JCSC1435)).